A 248-amino-acid polypeptide reads, in one-letter code: UPF0246 protein RC0754 (248 aa).

This sequence belongs to the UPF0246 family.

The polypeptide is UPF0246 protein RC0754 (Rickettsia conorii (strain ATCC VR-613 / Malish 7)).